The following is a 351-amino-acid chain: 1-acylglycerol-3-phosphate O-acyltransferase ABHD5 (351 aa).

Residues 79–184 enclose the AB hydrolase-1 domain; that stretch reads PLVLLHGFGG…LILVEPWGFP (106 aa). Ser124 carries the phosphoserine modification. The HXXXXD motif signature appears at 329–334; sequence HYVYAD.

The protein belongs to the peptidase S33 family. ABHD4/ABHD5 subfamily. Interacts with ADRP and PLIN. Interacts with PNPLA2. Interacts with PLIN5; promotes interaction with PNPLA2.

It localises to the cytoplasm. It is found in the lipid droplet. The catalysed reaction is a 1-acyl-sn-glycero-3-phosphate + an acyl-CoA = a 1,2-diacyl-sn-glycero-3-phosphate + CoA. It catalyses the reaction 1-(9Z-octadecenoyl)-sn-glycero-3-phosphate + (9Z)-octadecenoyl-CoA = 1,2-di-(9Z-octadecenoyl)-sn-glycero-3-phosphate + CoA. It carries out the reaction 1-(9Z-octadecenoyl)-sn-glycero-3-phosphate + hexadecanoyl-CoA = 1-(9Z)-octadecenoyl-2-hexadecanoyl-sn-glycero-3-phosphate + CoA. The enzyme catalyses 1-(9Z-octadecenoyl)-sn-glycero-3-phosphate + octadecanoyl-CoA = 1-(9Z-octadecenoyl)-2-octadecanoyl-sn-glycero-3-phosphate + CoA. The catalysed reaction is 1-(9Z-octadecenoyl)-sn-glycero-3-phosphate + (5Z,8Z,11Z,14Z)-eicosatetraenoyl-CoA = 1-(9Z)-octadecenoyl-2-(5Z,8Z,11Z,14Z)-eicosatetraenoyl-sn-glycero-3-phosphate + CoA. It catalyses the reaction eicosanoyl-CoA + 1-(9Z-octadecenoyl)-sn-glycero-3-phosphate = 1-(9Z)-octadecenoyl-2-eicosanoyl-sn-glycero-3-phosphate + CoA. It carries out the reaction 1-hexadecanoyl-sn-glycero-3-phosphate + (9Z)-octadecenoyl-CoA = 1-hexadecanoyl-2-(9Z-octadecenoyl)-sn-glycero-3-phosphate + CoA. The enzyme catalyses 1-octadecanoyl-sn-glycero-3-phosphate + (9Z)-octadecenoyl-CoA = 1-octadecanoyl-2-(9Z-octadecenoyl)-sn-glycero-3-phosphate + CoA. The catalysed reaction is 1-(5Z,8Z,11Z,14Z-eicosatetraenoyl)-sn-glycero-3-phosphate + (9Z)-octadecenoyl-CoA = 1-(5Z,8Z,11Z,14Z)-eicosatetraenoyl-2-(9Z)-octadecenoyl-sn-glycero-3-phosphate + CoA. Acyltransferase activity is inhibited by detergents such as Triton X-100 and 3-[(3-cholamidopropyl)dimethylammonio]-1-propanesulfonate (CHAPS). Acyltransferase activity is inhibited by the presence of magnesium and calcium. In terms of biological role, coenzyme A-dependent lysophosphatidic acid acyltransferase that catalyzes the transfer of an acyl group on a lysophosphatidic acid. Functions preferentially with 1-oleoyl-lysophosphatidic acid followed by 1-palmitoyl-lysophosphatidic acid, 1-stearoyl-lysophosphatidic acid and 1-arachidonoyl-lysophosphatidic acid as lipid acceptor. Functions preferentially with arachidonoyl-CoA followed by oleoyl-CoA as acyl group donors. Functions in phosphatidic acid biosynthesis. May regulate the cellular storage of triacylglycerol through activation of the phospholipase PNPLA2. Involved in keratinocyte differentiation. Regulates lipid droplet fusion. This is 1-acylglycerol-3-phosphate O-acyltransferase ABHD5 from Rattus norvegicus (Rat).